Here is a 279-residue protein sequence, read N- to C-terminus: Phosphatidylglycerol--prolipoprotein diacylglyceryl transferase (279 aa).

3 helical membrane-spanning segments follow: residues 18 to 38, 55 to 75, and 89 to 109; these read LSVR…YFVA, IIFY…VIFQ, and IWHG…AGVI. R137 serves as a coordination point for a 1,2-diacyl-sn-glycero-3-phospho-(1'-sn-glycerol). A run of 2 helical transmembrane segments spans residues 203–223 and 235–255; these read LGET…FIEG and IRVA…LIVY.

This sequence belongs to the Lgt family.

Its subcellular location is the cell membrane. It carries out the reaction L-cysteinyl-[prolipoprotein] + a 1,2-diacyl-sn-glycero-3-phospho-(1'-sn-glycerol) = an S-1,2-diacyl-sn-glyceryl-L-cysteinyl-[prolipoprotein] + sn-glycerol 1-phosphate + H(+). Its pathway is protein modification; lipoprotein biosynthesis (diacylglyceryl transfer). Catalyzes the transfer of the diacylglyceryl group from phosphatidylglycerol to the sulfhydryl group of the N-terminal cysteine of a prolipoprotein, the first step in the formation of mature lipoproteins. The chain is Phosphatidylglycerol--prolipoprotein diacylglyceryl transferase from Staphylococcus aureus (strain bovine RF122 / ET3-1).